The primary structure comprises 415 residues: Branched-chain-amino-acid aminotransferase 5, chloroplastic (415 aa).

Residues 1–65 (MERSAVASGF…IVSEVSRNRR (65 aa)) constitute a chloroplast transit peptide. The residue at position 261 (Lys-261) is an N6-(pyridoxal phosphate)lysine.

It belongs to the class-IV pyridoxal-phosphate-dependent aminotransferase family. Requires pyridoxal 5'-phosphate as cofactor.

The protein resides in the plastid. The protein localises to the chloroplast. The enzyme catalyses L-leucine + 2-oxoglutarate = 4-methyl-2-oxopentanoate + L-glutamate. It carries out the reaction L-isoleucine + 2-oxoglutarate = (S)-3-methyl-2-oxopentanoate + L-glutamate. The catalysed reaction is L-valine + 2-oxoglutarate = 3-methyl-2-oxobutanoate + L-glutamate. It participates in amino-acid biosynthesis; L-isoleucine biosynthesis; L-isoleucine from 2-oxobutanoate: step 4/4. The protein operates within amino-acid biosynthesis; L-leucine biosynthesis; L-leucine from 3-methyl-2-oxobutanoate: step 4/4. It functions in the pathway amino-acid biosynthesis; L-valine biosynthesis; L-valine from pyruvate: step 4/4. Its function is as follows. Converts 2-oxo acids to branched-chain amino acids. Acts on leucine, isoleucine and valine. In Arabidopsis thaliana (Mouse-ear cress), this protein is Branched-chain-amino-acid aminotransferase 5, chloroplastic (BCAT5).